The sequence spans 144 residues: Large ribosomal subunit protein uL15 (144 aa).

Positions M1 to G14 are enriched in basic residues. The tract at residues M1 to R35 is disordered.

This sequence belongs to the universal ribosomal protein uL15 family. In terms of assembly, part of the 50S ribosomal subunit.

In terms of biological role, binds to the 23S rRNA. The protein is Large ribosomal subunit protein uL15 of Saccharolobus solfataricus (strain ATCC 35092 / DSM 1617 / JCM 11322 / P2) (Sulfolobus solfataricus).